A 214-amino-acid chain; its full sequence is Ras-related protein RABH1c (214 aa).

16 to 23 (GDQSVGKT) is a GTP binding site. The Effector region motif lies at 38–46 (YQPTIGIDF). GTP contacts are provided by residues 64–68 (DTAGQ), 123–126 (NKTD), and 153–154 (SA). The interval 194-214 (TSNSSQGEQQGGAGGGGGCSC) is disordered. Positions 202-214 (QQGGAGGGGGCSC) are enriched in gly residues. S-geranylgeranyl cysteine attachment occurs at residues Cys-212 and Cys-214. Cys-214 is subject to Cysteine methyl ester.

Belongs to the small GTPase superfamily. Rab family. In terms of assembly, interacts with the C-terminus of GC5, but not with GC3.

The protein resides in the golgi apparatus membrane. Its subcellular location is the cytoplasm. It localises to the cytosol. Protein transport. Regulator of membrane traffic from the Golgi apparatus towards the endoplasmic reticulum (ER). The sequence is that of Ras-related protein RABH1c (RABH1C) from Arabidopsis thaliana (Mouse-ear cress).